A 229-amino-acid chain; its full sequence is Orotidine 5'-phosphate decarboxylase (229 aa).

Residues Asp-11, Lys-33, 61 to 70, Thr-116, Arg-179, Gln-188, Gly-208, and Arg-209 contribute to the substrate site; that span reads DMKLFDISAT. Residue Lys-63 is the Proton donor of the active site.

This sequence belongs to the OMP decarboxylase family. Type 1 subfamily. In terms of assembly, homodimer.

The catalysed reaction is orotidine 5'-phosphate + H(+) = UMP + CO2. The protein operates within pyrimidine metabolism; UMP biosynthesis via de novo pathway; UMP from orotate: step 2/2. Catalyzes the decarboxylation of orotidine 5'-monophosphate (OMP) to uridine 5'-monophosphate (UMP). This Jannaschia sp. (strain CCS1) protein is Orotidine 5'-phosphate decarboxylase.